A 407-amino-acid chain; its full sequence is BRCA1-A complex subunit Abraxas 1 (407 aa).

An MPN domain is found at Leu-7 to Lys-155. At Ser-48 the chain carries Phosphoserine. Residues Leu-209 to Ala-259 are a coiled coil. Residues Lys-344–Phe-407 are disordered. The segment covering Ala-347 to Ser-366 has biased composition (basic and acidic residues). Residues Ser-384, Ser-385, Ser-394, and Ser-404 each carry the phosphoserine modification. Acidic residues predominate over residues Ile-388–Ala-399. The pSXXF motif signature appears at Ser-404–Phe-407.

It belongs to the FAM175 family. Abraxas subfamily. As to quaternary structure, component of the ARISC complex, at least composed of UIMC1/RAP80, ABRAXAS1, BRCC3/BRCC36, BABAM2 and BABAM1/NBA1. Component of the BRCA1-A complex, at least composed of the BRCA1, BARD1, UIMC1/RAP80, ABRAXAS1, BRCC3/BRCC36, BABAM2 and BABAM1/NBA1. In the complex, interacts directly with UIMC1/RAP80, BRCC3/BRCC36 and BABAM2. Homodimer. Interacts directly (when phosphorylated at Ser-404) with BRCA1. The phosphorylated homodimer can interact directly with two BRCA1 chains, giving rise to a heterotetramer. Binds polyubiquitin. Post-translationally, phosphorylation of Ser-404 of the pSXXF motif by ATM or ATR constitutes a specific recognition motif for the BRCT domain of BRCA1.

It localises to the nucleus. In terms of biological role, involved in DNA damage response and double-strand break (DSB) repair. Component of the BRCA1-A complex, acting as a central scaffold protein that assembles the various components of the complex and mediates the recruitment of BRCA1. The BRCA1-A complex specifically recognizes 'Lys-63'-linked ubiquitinated histones H2A and H2AX at DNA lesion sites, leading to target the BRCA1-BARD1 heterodimer to sites of DNA damage at DSBs. This complex also possesses deubiquitinase activity that specifically removes 'Lys-63'-linked ubiquitin on histones H2A and H2AX. This chain is BRCA1-A complex subunit Abraxas 1, found in Mus musculus (Mouse).